The sequence spans 80 residues: U6 snRNA-associated Sm-like protein LSm6 (80 aa).

In terms of domain architecture, Sm spans T7–R79. K59 bears the N6-acetyllysine mark.

Belongs to the snRNP Sm proteins family. SmF/LSm6 subfamily. As to quaternary structure, component of the precatalytic spliceosome (spliceosome B complex). Component of the U4/U6-U5 tri-snRNP complex, a building block of the precatalytic spliceosome (spliceosome B complex). The U4/U6-U5 tri-snRNP complex is composed of the U4, U6 and U5 snRNAs and at least PRPF3, PRPF4, PRPF6, PRPF8, PRPF31, SNRNP200, TXNL4A, SNRNP40, SNRPB, SNRPD1, SNRPD2, SNRPD3, SNRPE, SNRPF, SNRPG, DDX23, CD2BP2, PPIH, SNU13, EFTUD2, SART1 and USP39, plus LSM2, LSM3, LSM4, LSM5, LSM6, LSM7 and LSM8. LSM2, LSM3, LSM4, LSM5, LSM6, LSM7 and LSM8 form a heptameric, ring-shaped subcomplex (the LSM2-8 complex) that is part of the U4/U6-U5 tri-snRNP complex and the precatalytic spliceosome. Component of the heptameric LSM1-LSM7 complex, which consists of LSM1, LSM2, LSM3, LSM4, LSM5, LSM6 and LSM7.

Its subcellular location is the cytoplasm. It localises to the nucleus. Functionally, plays a role in pre-mRNA splicing as component of the U4/U6-U5 tri-snRNP complex that is involved in spliceosome assembly, and as component of the precatalytic spliceosome (spliceosome B complex). The heptameric LSM2-8 complex binds specifically to the 3'-terminal U-tract of U6 snRNA. Component of LSm protein complexes, which are involved in RNA processing and may function in a chaperone-like manner, facilitating the efficient association of RNA processing factors with their substrates. Component of the cytoplasmic LSM1-LSM7 complex, which is thought to be involved in mRNA degradation by activating the decapping step in the 5'-to-3' mRNA decay pathway. The protein is U6 snRNA-associated Sm-like protein LSm6 (LSM6) of Homo sapiens (Human).